We begin with the raw amino-acid sequence, 170 residues long: Putative pre-16S rRNA nuclease (170 aa).

Residues 1-18 show a composition bias toward basic and acidic residues; it reads MGTDDRLPDRPGADDPGR. The disordered stretch occupies residues 1 to 22; that stretch reads MGTDDRLPDRPGADDPGRGRRI.

Belongs to the YqgF nuclease family.

It is found in the cytoplasm. Functionally, could be a nuclease involved in processing of the 5'-end of pre-16S rRNA. This is Putative pre-16S rRNA nuclease from Mycolicibacterium smegmatis (strain ATCC 700084 / mc(2)155) (Mycobacterium smegmatis).